Reading from the N-terminus, the 320-residue chain is Putative FBD-associated F-box protein At3g60710 (320 aa).

The region spanning 2–48 (EDLISQLPNELLQEILLNLPTSESVRTSVLPTRWRNLWQSVPGLYLI) is the F-box domain. Residues 212–268 (MEEIASSPVPKCLQTSIENVKIKMTPKADQEKSRKAETEVANYILENATLLKLTLWL) enclose the FBD domain.

The chain is Putative FBD-associated F-box protein At3g60710 from Arabidopsis thaliana (Mouse-ear cress).